Reading from the N-terminus, the 84-residue chain is Metallothionein-like protein 4A (84 aa).

The tract at residues 1–26 (MADTGKGSSVAGCNDSCGCPSPCPGG) is disordered.

This sequence belongs to the metallothionein superfamily. Type 15 family. In terms of tissue distribution, expressed specifically in seeds.

It is found in the cytoplasm. Its subcellular location is the nucleus. It localises to the cell membrane. In terms of biological role, metallothioneins have a high content of cysteine residues that bind various heavy metals. Functions as a metal chelator of copper (Cu) and zinc (Zn). Plays a role in storing and distributing Zn ion in seed. The protein is Metallothionein-like protein 4A (MT4A) of Arabidopsis thaliana (Mouse-ear cress).